The sequence spans 567 residues: Urease subunit alpha (567 aa).

The Urease domain occupies 129–567 (GGVDSHIHFI…LPLAQRYFLF (439 aa)). Ni(2+) contacts are provided by His134, His136, and Lys217. N6-carboxylysine is present on Lys217. Residue His219 coordinates substrate. Ni(2+) is bound by residues His246 and His272. Catalysis depends on His320, which acts as the Proton donor. Asp360 contributes to the Ni(2+) binding site.

This sequence belongs to the metallo-dependent hydrolases superfamily. Urease alpha subunit family. As to quaternary structure, heterotrimer of UreA (gamma), UreB (beta) and UreC (alpha) subunits. Three heterotrimers associate to form the active enzyme. Ni cation serves as cofactor. Post-translationally, carboxylation allows a single lysine to coordinate two nickel ions.

It localises to the cytoplasm. It carries out the reaction urea + 2 H2O + H(+) = hydrogencarbonate + 2 NH4(+). It functions in the pathway nitrogen metabolism; urea degradation; CO(2) and NH(3) from urea (urease route): step 1/1. This chain is Urease subunit alpha, found in Pseudomonas putida (strain ATCC 47054 / DSM 6125 / CFBP 8728 / NCIMB 11950 / KT2440).